Consider the following 302-residue polypeptide: Possible hemolysin C (302 aa).

CBS domains lie at 79-141 and 144-201; these read MVPR…NFRL and LIRK…IDDE.

It belongs to the UPF0053 family. Hemolysin C subfamily.

The protein is Possible hemolysin C (tlyC) of Rickettsia bellii (strain OSU 85-389).